The primary structure comprises 1208 residues: Putative protease AXL1 (1208 aa).

His68 contacts Zn(2+). Glu71 serves as the catalytic Proton acceptor. 2 residues coordinate Zn(2+): His72 and Glu156. Ser262 is modified (phosphoserine).

It belongs to the peptidase M16 family. As to quaternary structure, interacts with BUD5. Zn(2+) is required as a cofactor.

Its subcellular location is the bud neck. Probable protease. Involved in axial budding. The chain is Putative protease AXL1 (AXL1) from Saccharomyces cerevisiae (strain ATCC 204508 / S288c) (Baker's yeast).